Here is an 820-residue protein sequence, read N- to C-terminus: Leucine--tRNA ligase (820 aa).

The 'HIGH' region motif lies at 40 to 51 (PYPSGAGLHVGH). The 'KMSKS' region motif lies at 601–605 (KMSKS). ATP is bound at residue Lys-604.

This sequence belongs to the class-I aminoacyl-tRNA synthetase family.

It localises to the cytoplasm. The enzyme catalyses tRNA(Leu) + L-leucine + ATP = L-leucyl-tRNA(Leu) + AMP + diphosphate. The chain is Leucine--tRNA ligase from Chlamydia caviae (strain ATCC VR-813 / DSM 19441 / 03DC25 / GPIC) (Chlamydophila caviae).